Reading from the N-terminus, the 199-residue chain is Recombination protein RecR (199 aa).

The segment at cysteine 57 to cysteine 72 adopts a C4-type zinc-finger fold. The Toprim domain maps to aspartate 81 to proline 176.

Belongs to the RecR family.

May play a role in DNA repair. It seems to be involved in an RecBC-independent recombinational process of DNA repair. It may act with RecF and RecO. The polypeptide is Recombination protein RecR (Shewanella halifaxensis (strain HAW-EB4)).